Consider the following 488-residue polypeptide: Zinc metalloproteinase-disintegrin 8 (488 aa).

The signal sequence occupies residues 1–20; sequence MIQVLLVTICLAVFPYQGSS. Residues 21 to 191 constitute a propeptide that is removed on maturation; the sequence is IILESGNVND…KASQLNLPPE (171 aa). The region spanning 198-396 is the Peptidase M12B domain; the sequence is TYIELVVVAD…STTRCLHNEP (199 aa). Residues Glu201 and Asp285 each contribute to the Ca(2+) site. Asn296 is a glycosylation site (N-linked (GlcNAc...) asparagine). 3 disulfide bridges follow: Cys309–Cys391, Cys349–Cys373, and Cys351–Cys356. His334 provides a ligand contact to Zn(2+). The active site involves Glu335. His338 and His344 together coordinate Zn(2+). Residues Cys391, Asn394, Asn409, Glu413, Glu416, and Asp419 each coordinate Ca(2+). The Disintegrin domain maps to 404–488; it reads PPFCGNYFKE…ADCPRNGLYG (85 aa). 7 disulfide bridges follow: Cys407–Cys426, Cys418–Cys436, Cys420–Cys431, Cys430–Cys453, Cys444–Cys450, Cys449–Cys474, and Cys462–Cys481. The short motif at 466–468 is the Cell attachment site element; the sequence is RGD.

Belongs to the venom metalloproteinase (M12B) family. P-II subfamily. Requires Zn(2+) as cofactor. In terms of tissue distribution, expressed by the venom gland.

It localises to the secreted. Inhibits ADP-induced platelet aggregation (probably by binding integrin alpha-IIb/beta-3 (ITGA2B/ITGB3)) and degrades fibrinogen. This is Zinc metalloproteinase-disintegrin 8 from Crotalus adamanteus (Eastern diamondback rattlesnake).